The chain runs to 1624 residues: ATP-binding cassette sub-family A member 6 (1624 aa).

A helical transmembrane segment spans residues 31-51 (LLEWSIPIIIGLHMGLFSYLA). N-linked (GlcNAc...) asparagine glycosylation is found at N84 and N91. 6 helical membrane-spanning segments follow: residues 222–242 (IFIL…SSNV), 267–287 (WGLI…IIIT), 297–317 (FLVI…VTFL), 326–346 (VLTN…GFTV), 356–376 (EWVL…KVIF), and 395–415 (VMIA…VLAL). Residues 478–713 (IRIRNIKKEY…WGLGYHLSLF (236 aa)) form the ABC transporter 1 domain. 514–521 (GHSGAGKS) serves as a coordination point for ATP. N576 carries an N-linked (GlcNAc...) asparagine glycan. The next 8 helical transmembrane spans lie at 854–874 (AFLI…IEYV), 971–991 (LHCF…MLNH), 1005–1025 (FIVL…CVIC), 1058–1078 (WCGQ…TSYF), 1094–1114 (IVFS…FLTY), 1130–1150 (WSIC…NGPF), 1154–1174 (LVIS…LVVL), and 1194–1214 (AVDL…IFVL). Positions 1282–1520 (LHKEYAGQKK…FGQDYVLELR (239 aa)) constitute an ABC transporter 2 domain. Residue 1320-1327 (GPDGAGKS) participates in ATP binding.

The protein belongs to the ABC transporter superfamily. ABCA family. As to expression, widely expressed with higher expression in heart, lung, brain, spleen and testis.

It is found in the golgi apparatus membrane. Functionally, probable transporter which may play a role in macrophage lipid transport and homeostasis. This is ATP-binding cassette sub-family A member 6 (Abca6) from Mus musculus (Mouse).